We begin with the raw amino-acid sequence, 244 residues long: MRLKTLKFPFVNKKNTRTFKKKCGRFLSYFIGLTVALTFLFRFVPIPFSAYMAEQKLAHIIQLDFDYKVNYDWISLEDISPYMQLAVIAAEDQNFPNHGGFDWNAIKSAIKYNEKSSRIRGASTISQQTAKNMFLWHGQSWIRKGIEVPVTFMLETLWSKKRILEVYLNIAEFGNGIFGVEAASRYYFKKPAKRLTQSEAALLAAVLPNPIIYKANRPSLLVRKKQAWIIRQMNSLGLNYLKKL.

The helical transmembrane segment at 26-46 (FLSYFIGLTVALTFLFRFVPI) threads the bilayer.

The protein belongs to the glycosyltransferase 51 family.

It localises to the cell inner membrane. It catalyses the reaction [GlcNAc-(1-&gt;4)-Mur2Ac(oyl-L-Ala-gamma-D-Glu-L-Lys-D-Ala-D-Ala)](n)-di-trans,octa-cis-undecaprenyl diphosphate + beta-D-GlcNAc-(1-&gt;4)-Mur2Ac(oyl-L-Ala-gamma-D-Glu-L-Lys-D-Ala-D-Ala)-di-trans,octa-cis-undecaprenyl diphosphate = [GlcNAc-(1-&gt;4)-Mur2Ac(oyl-L-Ala-gamma-D-Glu-L-Lys-D-Ala-D-Ala)](n+1)-di-trans,octa-cis-undecaprenyl diphosphate + di-trans,octa-cis-undecaprenyl diphosphate + H(+). It participates in cell wall biogenesis; peptidoglycan biosynthesis. Functionally, peptidoglycan polymerase that catalyzes glycan chain elongation from lipid-linked precursors. This is Biosynthetic peptidoglycan transglycosylase from Mannheimia succiniciproducens (strain KCTC 0769BP / MBEL55E).